The sequence spans 402 residues: MAQDRKKVLVLGAGYAGLQTVTKLQKELSADEADITLINKNKYHYEATWLHEASAGTLNYEDLIYPIESVIKEDKVKFINAEVTKIDRNAKKVETNHGIYDYDILVVALGFESETFGINGMKDYAFQIENIETARKLSRHIEDKFANYAASKEKDDKDLAILVGGAGFTGIEFLGELTERIPELCNKYGVDQNKVRVTCVEAAPKMLPMFSDELVNYAVNYLEDRGVEFKIATPIVACNEKGFVVKINDQEQQLEAGTAIWAAGVRGSKLMEESFEGVKRGRIVTKQDLTIEGHDDIFVIGDVSAFIPAGEERPLPTTAQIAMQQGEHVAKSIKNILNGQAATDFEYVDRGTVCSLGAHDGVGIVYGRDITGKKAAFMKKVIDTRAVFKIGGVGLAFKKGKF.

Residues 12-16 (GAGYA), 39-40 (NK), and Val83 contribute to the FAD site. Residue Glu172 is part of the active site. Residues Asp302, 319–320 (AQ), and Lys379 contribute to the FAD site.

This sequence belongs to the NADH dehydrogenase family. It depends on FAD as a cofactor.

It localises to the cell membrane. It catalyses the reaction a quinone + NADH + H(+) = a quinol + NAD(+). In terms of biological role, alternative, nonproton pumping NADH:quinone oxidoreductase that delivers electrons to the respiratory chain by oxidation of NADH and reduction of quinones, and contributes to the regeneration of NAD(+). The polypeptide is Type II NADH:quinone oxidoreductase (Staphylococcus haemolyticus (strain JCSC1435)).